Consider the following 242-residue polypeptide: UPF0309 protein BAbS19_II03080 (242 aa).

Residues A30–P214 enclose the SIS domain.

This sequence belongs to the UPF0309 family.

The chain is UPF0309 protein BAbS19_II03080 from Brucella abortus (strain S19).